Reading from the N-terminus, the 449-residue chain is Tubulin beta-4 chain (449 aa).

The short motif at 1 to 4 (MREI) is the MREI motif element. Gln-11, Glu-69, Ser-138, Gly-142, Thr-143, Gly-144, Asn-204, and Asn-226 together coordinate GTP. Glu-69 contributes to the Mg(2+) binding site. The segment at 421-449 (EYQQYQDATAEEEGEMYEDDEEESEQGAK) is disordered. Residues 429 to 449 (TAEEEGEMYEDDEEESEQGAK) show a composition bias toward acidic residues. Glu-438 carries the post-translational modification 5-glutamyl polyglutamate. A Phosphoserine modification is found at Ser-444.

Belongs to the tubulin family. As to quaternary structure, dimer of alpha and beta chains. A typical microtubule is a hollow water-filled tube with an outer diameter of 25 nm and an inner diameter of 15 nM. Alpha-beta heterodimers associate head-to-tail to form protofilaments running lengthwise along the microtubule wall with the beta-tubulin subunit facing the microtubule plus end conferring a structural polarity. Microtubules usually have 13 protofilaments but different protofilament numbers can be found in some organisms and specialized cells. Requires Mg(2+) as cofactor. Some glutamate residues at the C-terminus are polyglycylated, resulting in polyglycine chains on the gamma-carboxyl group. Glycylation is mainly limited to tubulin incorporated into axonemes (cilia and flagella) whereas glutamylation is prevalent in neuronal cells, centrioles, axonemes, and the mitotic spindle. Both modifications can coexist on the same protein on adjacent residues, and lowering polyglycylation levels increases polyglutamylation, and reciprocally. The precise function of polyglycylation is still unclear. Post-translationally, some glutamate residues at the C-terminus are polyglutamylated, resulting in polyglutamate chains on the gamma-carboxyl group. Polyglutamylation plays a key role in microtubule severing by spastin (SPAST). SPAST preferentially recognizes and acts on microtubules decorated with short polyglutamate tails: severing activity by SPAST increases as the number of glutamates per tubulin rises from one to eight, but decreases beyond this glutamylation threshold. In terms of tissue distribution, neuron specific.

Its subcellular location is the cytoplasm. It localises to the cytoskeleton. In terms of biological role, tubulin is the major constituent of microtubules, a cylinder consisting of laterally associated linear protofilaments composed of alpha- and beta-tubulin heterodimers. Microtubules grow by the addition of GTP-tubulin dimers to the microtubule end, where a stabilizing cap forms. Below the cap, tubulin dimers are in GDP-bound state, owing to GTPase activity of alpha-tubulin. The protein is Tubulin beta-4 chain of Gallus gallus (Chicken).